The chain runs to 468 residues: ATP synthase subunit beta 1 (468 aa).

Residue 155–162 (GGAGVGKT) coordinates ATP.

Belongs to the ATPase alpha/beta chains family. As to quaternary structure, F-type ATPases have 2 components, CF(1) - the catalytic core - and CF(0) - the membrane proton channel. CF(1) has five subunits: alpha(3), beta(3), gamma(1), delta(1), epsilon(1). CF(0) has three main subunits: a(1), b(2) and c(9-12). The alpha and beta chains form an alternating ring which encloses part of the gamma chain. CF(1) is attached to CF(0) by a central stalk formed by the gamma and epsilon chains, while a peripheral stalk is formed by the delta and b chains.

Its subcellular location is the cell inner membrane. It catalyses the reaction ATP + H2O + 4 H(+)(in) = ADP + phosphate + 5 H(+)(out). Functionally, produces ATP from ADP in the presence of a proton gradient across the membrane. The catalytic sites are hosted primarily by the beta subunits. The polypeptide is ATP synthase subunit beta 1 (Syntrophotalea carbinolica (strain DSM 2380 / NBRC 103641 / GraBd1) (Pelobacter carbinolicus)).